The primary structure comprises 262 residues: Probable carboxylesterase Culp3 (262 aa).

Positions 1–41 (MNNRPIRLLTSGRAGLGAGALITAVVLLIALGAVWTPVAFA) are cleaved as a signal peptide. Cysteines 44 and 114 form a disulfide. The active-site Nucleophile is Ser-125. A disulfide bridge links Cys-188 with Cys-195. Asp-192 is an active-site residue. His-206 functions as the Proton donor/acceptor in the catalytic mechanism. The interval 241–262 (LPGSVLQMPGTAAPAPESLHGR) is disordered.

This sequence belongs to the cutinase family.

It localises to the secreted. Shows weak esterase activity with the p-nitrophenol-linked aliphatic ester pNP-butyrate. Does not exhibit cutinase activity. In Mycobacterium tuberculosis (strain ATCC 25618 / H37Rv), this protein is Probable carboxylesterase Culp3 (cut3).